Here is a 469-residue protein sequence, read N- to C-terminus: Protein DETOXIFICATION 18 (469 aa).

The next 12 helical transmembrane spans lie at 40–60, 73–93, 121–141, 152–172, 183–203, 206–226, 252–274, 293–313, 344–364, 374–394, 406–426, and 438–458; these read LPMI…VMFA, LANS…SGAL, LVFT…FLLL, ALYM…QNIL, PLVL…YALV, AGLG…IAFV, HVVL…YWAF, LVAI…GLSA, VLAL…VGLF, FASL…QGVL, LATV…SVLC, and WIGL…MTIF.

This sequence belongs to the multi antimicrobial extrusion (MATE) (TC 2.A.66.1) family.

Its subcellular location is the membrane. The sequence is that of Protein DETOXIFICATION 18 from Arabidopsis thaliana (Mouse-ear cress).